We begin with the raw amino-acid sequence, 91 residues long: Small ribosomal subunit protein uS17 (91 aa).

Belongs to the universal ribosomal protein uS17 family. As to quaternary structure, part of the 30S ribosomal subunit.

Its function is as follows. One of the primary rRNA binding proteins, it binds specifically to the 5'-end of 16S ribosomal RNA. This Psychrobacter cryohalolentis (strain ATCC BAA-1226 / DSM 17306 / VKM B-2378 / K5) protein is Small ribosomal subunit protein uS17.